The sequence spans 279 residues: Putative pyruvate, phosphate dikinase regulatory protein (279 aa).

154 to 161 (GVSRTSKT) contributes to the ADP binding site.

Belongs to the pyruvate, phosphate/water dikinase regulatory protein family. PDRP subfamily.

It catalyses the reaction N(tele)-phospho-L-histidyl/L-threonyl-[pyruvate, phosphate dikinase] + ADP = N(tele)-phospho-L-histidyl/O-phospho-L-threonyl-[pyruvate, phosphate dikinase] + AMP + H(+). The catalysed reaction is N(tele)-phospho-L-histidyl/O-phospho-L-threonyl-[pyruvate, phosphate dikinase] + phosphate + H(+) = N(tele)-phospho-L-histidyl/L-threonyl-[pyruvate, phosphate dikinase] + diphosphate. Its function is as follows. Bifunctional serine/threonine kinase and phosphorylase involved in the regulation of the pyruvate, phosphate dikinase (PPDK) by catalyzing its phosphorylation/dephosphorylation. The protein is Putative pyruvate, phosphate dikinase regulatory protein of Rhodopseudomonas palustris (strain BisB18).